Consider the following 424-residue polypeptide: Tyrosine--tRNA ligase (424 aa).

Residue Tyr-37 participates in L-tyrosine binding. The 'HIGH' region signature appears at 42 to 51 (ITADSLHVGH). Positions 175 and 179 each coordinate L-tyrosine. Positions 235–239 (KFGKT) match the 'KMSKS' region motif. Lys-238 contributes to the ATP binding site. Residues 356–414 (GNLQQLLVYSRLALSRSHAKSMIVSNSVRINNIIQNNPFYILCNRDKMYHKYTLLSRGK) form the S4 RNA-binding domain.

The protein belongs to the class-I aminoacyl-tRNA synthetase family. TyrS type 1 subfamily. As to quaternary structure, homodimer.

Its subcellular location is the cytoplasm. It catalyses the reaction tRNA(Tyr) + L-tyrosine + ATP = L-tyrosyl-tRNA(Tyr) + AMP + diphosphate + H(+). Functionally, catalyzes the attachment of tyrosine to tRNA(Tyr) in a two-step reaction: tyrosine is first activated by ATP to form Tyr-AMP and then transferred to the acceptor end of tRNA(Tyr). The sequence is that of Tyrosine--tRNA ligase from Buchnera aphidicola subsp. Baizongia pistaciae (strain Bp).